A 208-amino-acid polypeptide reads, in one-letter code: Uracil phosphoribosyltransferase (208 aa).

Residues arginine 78, arginine 103, and 130 to 138 each bind 5-phospho-alpha-D-ribose 1-diphosphate; that span reads DPMLAIGGS. Residues isoleucine 193 and 198–200 contribute to the uracil site; that span reads GDA. Residue aspartate 199 participates in 5-phospho-alpha-D-ribose 1-diphosphate binding.

It belongs to the UPRTase family. Requires Mg(2+) as cofactor.

It catalyses the reaction UMP + diphosphate = 5-phospho-alpha-D-ribose 1-diphosphate + uracil. Its pathway is pyrimidine metabolism; UMP biosynthesis via salvage pathway; UMP from uracil: step 1/1. With respect to regulation, allosterically activated by GTP. In terms of biological role, catalyzes the conversion of uracil and 5-phospho-alpha-D-ribose 1-diphosphate (PRPP) to UMP and diphosphate. This Vibrio cholerae serotype O1 (strain ATCC 39315 / El Tor Inaba N16961) protein is Uracil phosphoribosyltransferase.